A 922-amino-acid polypeptide reads, in one-letter code: Protein translocase subunit SecA (922 aa).

ATP contacts are provided by residues Gln-87, 105–109 (GEGKT), and Asp-519. The disordered stretch occupies residues 850–891 (HASRQMRSIQGNAQHNSMGSFSGSGHGMGPTALSARSRPENA). Residues 854–865 (QMRSIQGNAQHN) are compositionally biased toward polar residues. Positions 906, 908, 917, and 918 each coordinate Zn(2+).

Belongs to the SecA family. Monomer and homodimer. Part of the essential Sec protein translocation apparatus which comprises SecA, SecYEG and auxiliary proteins SecDF. Other proteins may also be involved. Zn(2+) serves as cofactor.

The protein localises to the cell inner membrane. Its subcellular location is the cytoplasm. It catalyses the reaction ATP + H2O + cellular proteinSide 1 = ADP + phosphate + cellular proteinSide 2.. In terms of biological role, part of the Sec protein translocase complex. Interacts with the SecYEG preprotein conducting channel. Has a central role in coupling the hydrolysis of ATP to the transfer of proteins into and across the cell membrane, serving as an ATP-driven molecular motor driving the stepwise translocation of polypeptide chains across the membrane. The polypeptide is Protein translocase subunit SecA (Treponema denticola (strain ATCC 35405 / DSM 14222 / CIP 103919 / JCM 8153 / KCTC 15104)).